The chain runs to 126 residues: S-adenosylmethionine decarboxylase proenzyme (126 aa).

Ser-63 serves as the catalytic Schiff-base intermediate with substrate; via pyruvic acid. At Ser-63 the chain carries Pyruvic acid (Ser); by autocatalysis. His-68 serves as the catalytic Proton acceptor; for processing activity. Cys-83 serves as the catalytic Proton donor; for catalytic activity.

The protein belongs to the prokaryotic AdoMetDC family. Type 1 subfamily. In terms of assembly, heterotetramer of two alpha and two beta chains arranged as a dimer of alpha/beta heterodimers. Pyruvate serves as cofactor. In terms of processing, is synthesized initially as an inactive proenzyme. Formation of the active enzyme involves a self-maturation process in which the active site pyruvoyl group is generated from an internal serine residue via an autocatalytic post-translational modification. Two non-identical subunits are generated from the proenzyme in this reaction, and the pyruvate is formed at the N-terminus of the alpha chain, which is derived from the carboxyl end of the proenzyme. The post-translation cleavage follows an unusual pathway, termed non-hydrolytic serinolysis, in which the side chain hydroxyl group of the serine supplies its oxygen atom to form the C-terminus of the beta chain, while the remainder of the serine residue undergoes an oxidative deamination to produce ammonia and the pyruvoyl group blocking the N-terminus of the alpha chain.

It catalyses the reaction S-adenosyl-L-methionine + H(+) = S-adenosyl 3-(methylsulfanyl)propylamine + CO2. It participates in amine and polyamine biosynthesis; S-adenosylmethioninamine biosynthesis; S-adenosylmethioninamine from S-adenosyl-L-methionine: step 1/1. Functionally, catalyzes the decarboxylation of S-adenosylmethionine to S-adenosylmethioninamine (dcAdoMet), the propylamine donor required for the synthesis of the polyamines spermine and spermidine from the diamine putrescine. This Bacillus velezensis (strain DSM 23117 / BGSC 10A6 / LMG 26770 / FZB42) (Bacillus amyloliquefaciens subsp. plantarum) protein is S-adenosylmethionine decarboxylase proenzyme.